The chain runs to 803 residues: Myb-like protein V (803 aa).

Disordered regions lie at residues 237 to 333 and 429 to 803; these read SNIY…LPGL and KSTS…SRRK. Residues 258 to 323 adopt a coiled-coil conformation; sequence DANDKNENNN…ENNKNKRTKS (66 aa). Residues 271–294 show a composition bias toward acidic residues; that stretch reads DDADDAAADDADDADDDDMDDESD. Low complexity predominate over residues 295–315; that stretch reads SNNNNKNSNNKNSNNKNSNEN. The 48-residue stretch at 332–379 folds into the Myb-like domain; the sequence is GLWTDEECRSLIKAVMIIGHRWIKIKEDYYSTSKRKPSQLKDKMRSLR. Coiled coils occupy residues 400–429 and 463–496; these read EIEK…SNIK and NNED…NSAV. Residues 429 to 438 show a composition bias toward polar residues; sequence KSTSNTSAAS. Composition is skewed to acidic residues over residues 448 to 480 and 510 to 533; these read NDSD…DEND and EEEE…EENE. Basic residues-rich tracts occupy residues 537 to 553 and 568 to 577; these read KQKR…KKLK and HKSKLKSKPQ. Residues 573–616 are a coiled coil; that stretch reads KSKPQRKVEKEESEKEESEEEESEEEEEEDDEDYESEEDKKKKK. Acidic residues predominate over residues 586-609; that stretch reads EKEESEEEESEEEEEEDDEDYESE. 2 stretches are compositionally biased toward low complexity: residues 625–636 and 666–733; these read TSTHTTTTTTTT and KKSN…PTKK. The segment covering 786–795 has biased composition (basic and acidic residues); sequence LNKDSKENKK.

In Dictyostelium discoideum (Social amoeba), this protein is Myb-like protein V (mybV).